A 134-amino-acid chain; its full sequence is Acyl carrier protein, mitochondrial (134 aa).

Residues 1 to 46 (MFRTAALTAARVARPAVASAVRAGVARPAFVQAVPKVAAFQAVRFY) constitute a mitochondrion transit peptide. The Carrier domain maps to 55 to 131 (DEVFSRIAQV…KAVEYILSQP (77 aa)). Serine 91 carries the O-(pantetheine 4'-phosphoryl)serine modification.

This sequence belongs to the acyl carrier protein (ACP) family. In terms of assembly, complex I is composed of about 30 different subunits. In terms of processing, 4'-phosphopantetheine is transferred from CoA to a specific serine of apo-ACP by acpS. This modification is essential for activity because fatty acids are bound in thioester linkage to the sulfhydryl of the prosthetic group.

It localises to the mitochondrion. Its pathway is lipid metabolism; fatty acid biosynthesis. Functionally, carrier of the growing fatty acid chain in fatty acid biosynthesis. May be involved in the synthesis of very-long-chain fatty acids. Accessory and non-catalytic subunit of the mitochondrial membrane respiratory chain NADH dehydrogenase (Complex I), which functions in the transfer of electrons from NADH to the respiratory chain. The polypeptide is Acyl carrier protein, mitochondrial (nuo-12) (Neurospora crassa (strain ATCC 24698 / 74-OR23-1A / CBS 708.71 / DSM 1257 / FGSC 987)).